We begin with the raw amino-acid sequence, 344 residues long: SAGA complex subunit Sgf73 (344 aa).

The segment covering N123–K143 has biased composition (polar residues). The tract at residues N123–P196 is disordered. The SCA7 domain occupies N190 to I256.

It belongs to the ataxin-7 family. Component of the 1.8 MDa SAGA (Spt-Ada-Gcn5 acetyltransferase) complex, which is composed of 19 subunits tra1, spt7, taf5, ngg1/ada3, sgf73, spt20, spt8, taf12, taf6, hfi1/ada1, ubp8, gcn5, ada2, spt3, sgf29, taf10, taf9, sgf11 and sus1. The SAGA complex is composed of 4 modules, namely the HAT (histone acetyltransferase) module (gcn5, ada2, ngg1/ada3 and sgf29), the DUB (deubiquitinating) module (ubp8, sgf11, sgf73 and sus1), the core or TAF (TBP-associated factor) module (taf5, taf6, taf9, taf10 and taf12), and the Tra1 or SPT (Suppressor of Ty) module (tra1, hfi1/ada1, spt3, spt7, spt8 and spt20). The Tra1/SPT module binds activators, the core module recruits TBP (TATA-binding protein), the HAT module contains the histone H3 acetyltransferase gcn5, and the DUB module comprises the histone H2B deubiquitinase ubp8. Interacts with the RITS subunits ago1 and chp1.

It localises to the nucleus. In terms of biological role, component of the transcription coactivator SAGA complex. SAGA acts as a general cofactor required for essentially all RNA polymerase II transcription. At the promoters, SAGA is required for transcription pre-initiation complex (PIC) recruitment. It influences RNA polymerase II transcriptional activity through different activities such as TBP interaction (via core/TAF module) and promoter selectivity, interaction with transcription activators (via Tra1/SPT module), and chromatin modification through histone acetylation (via HAT module) and deubiquitination (via DUB module). SAGA preferentially acetylates histones H3 (to form H3K9ac, H3K14ac, H3K18ac and H3K23ac) and H2B and deubiquitinates histone H2B. SAGA interacts with DNA via upstream activating sequences (UASs). Sgf73 tethers the DUB module to the rest of the SAGA complex through its central domain and activates the ubiquitin hydrolase ubp8 by maintaining its catalytic domain in an active conformation. Sgf73 mediates recruitment of the TREX-2 mRNA export factors sac3 and thp1 to SAGA, which is crucial to target TREX-2 to the nuclear pore complex (NPC) necessary for export of mRNA. Upon environmental stress, involved in the bypass of the canonical mRNA export process for the immediate export of stress-related transcripts to maintain proteostasis. Independent on its function in SAGA, promotes the assembly of the RNA-induced transcriptional silencing complex (RITS) and is required for pericentromeric heterochromatin silencing and the generation of siRNA. The polypeptide is SAGA complex subunit Sgf73 (sgf73) (Schizosaccharomyces pombe (strain 972 / ATCC 24843) (Fission yeast)).